A 246-amino-acid polypeptide reads, in one-letter code: Acetoacetate decarboxylase (246 aa).

K115 (schiff-base intermediate with acetoacetate) is an active-site residue.

It belongs to the ADC family.

It catalyses the reaction acetoacetate + H(+) = acetone + CO2. In terms of biological role, catalyzes the conversion of acetoacetate to acetone and carbon dioxide. The sequence is that of Acetoacetate decarboxylase from Clostridium beijerinckii (Clostridium MP).